The primary structure comprises 750 residues: Photosystem I P700 chlorophyll a apoprotein A1 (750 aa).

8 consecutive transmembrane segments (helical) span residues 70–93, 156–179, 195–219, 291–309, 346–369, 385–411, 433–455, and 531–549; these read IFSA…FHGA, LYCT…FHYH, LNHH…HVSL, IAHH…GHMY, WHAQ…HHMY, LSLF…IFMV, AIIS…LYIH, and FLVH…LILL. [4Fe-4S] cluster is bound by residues Cys573 and Cys582. Transmembrane regions (helical) follow at residues 589-610 and 664-686; these read HVFL…HFSW and LSAY…MFLF. His675 contacts chlorophyll a'. Met683 and Tyr691 together coordinate chlorophyll a. Trp692 provides a ligand contact to phylloquinone. A helical membrane pass occupies residues 724-744; sequence AVGVTHYLLGGIATTWAFFLA.

It belongs to the PsaA/PsaB family. In terms of assembly, the PsaA/B heterodimer binds the P700 chlorophyll special pair and subsequent electron acceptors. PSI consists of a core antenna complex that captures photons, and an electron transfer chain that converts photonic excitation into a charge separation. The eukaryotic PSI reaction center is composed of at least 11 subunits. It depends on P700 is a chlorophyll a/chlorophyll a' dimer, A0 is one or more chlorophyll a, A1 is one or both phylloquinones and FX is a shared 4Fe-4S iron-sulfur center. as a cofactor.

It localises to the plastid. It is found in the chloroplast thylakoid membrane. The enzyme catalyses reduced [plastocyanin] + hnu + oxidized [2Fe-2S]-[ferredoxin] = oxidized [plastocyanin] + reduced [2Fe-2S]-[ferredoxin]. Functionally, psaA and PsaB bind P700, the primary electron donor of photosystem I (PSI), as well as the electron acceptors A0, A1 and FX. PSI is a plastocyanin-ferredoxin oxidoreductase, converting photonic excitation into a charge separation, which transfers an electron from the donor P700 chlorophyll pair to the spectroscopically characterized acceptors A0, A1, FX, FA and FB in turn. Oxidized P700 is reduced on the lumenal side of the thylakoid membrane by plastocyanin. The polypeptide is Photosystem I P700 chlorophyll a apoprotein A1 (Gossypium hirsutum (Upland cotton)).